The chain runs to 191 residues: UPF0301 protein Bphy_2327 (191 aa).

It belongs to the UPF0301 (AlgH) family.

This is UPF0301 protein Bphy_2327 from Paraburkholderia phymatum (strain DSM 17167 / CIP 108236 / LMG 21445 / STM815) (Burkholderia phymatum).